Reading from the N-terminus, the 151-residue chain is Deoxyuridine 5'-triphosphate nucleotidohydrolase (151 aa).

Substrate-binding positions include 70-72, Asn83, 87-89, and Met97; these read RSG and LID.

It belongs to the dUTPase family. Requires Mg(2+) as cofactor.

The enzyme catalyses dUTP + H2O = dUMP + diphosphate + H(+). The protein operates within pyrimidine metabolism; dUMP biosynthesis; dUMP from dCTP (dUTP route): step 2/2. This enzyme is involved in nucleotide metabolism: it produces dUMP, the immediate precursor of thymidine nucleotides and it decreases the intracellular concentration of dUTP so that uracil cannot be incorporated into DNA. The sequence is that of Deoxyuridine 5'-triphosphate nucleotidohydrolase from Tolumonas auensis (strain DSM 9187 / NBRC 110442 / TA 4).